A 519-amino-acid chain; its full sequence is ATP synthase subunit beta, mitochondrial (519 aa).

195–202 (GGAGVGKT) is a binding site for ATP.

The protein belongs to the ATPase alpha/beta chains family. As to quaternary structure, F-type ATPases have 2 components, CF(1) - the catalytic core - and CF(0) - the membrane proton channel. CF(1) has five subunits: alpha(3), beta(3), gamma(1), delta(1), epsilon(1). CF(0) has three main subunits: a, b and c.

The protein resides in the mitochondrion. It localises to the mitochondrion inner membrane. The catalysed reaction is ATP + H2O + 4 H(+)(in) = ADP + phosphate + 5 H(+)(out). In terms of biological role, mitochondrial membrane ATP synthase (F(1)F(0) ATP synthase or Complex V) produces ATP from ADP in the presence of a proton gradient across the membrane which is generated by electron transport complexes of the respiratory chain. F-type ATPases consist of two structural domains, F(1) - containing the extramembraneous catalytic core, and F(0) - containing the membrane proton channel, linked together by a central stalk and a peripheral stalk. During catalysis, ATP synthesis in the catalytic domain of F(1) is coupled via a rotary mechanism of the central stalk subunits to proton translocation. Subunits alpha and beta form the catalytic core in F(1). Rotation of the central stalk against the surrounding alpha(3)beta(3) subunits leads to hydrolysis of ATP in three separate catalytic sites on the beta subunits. This is ATP synthase subunit beta, mitochondrial (atp-2) from Neurospora crassa (strain ATCC 24698 / 74-OR23-1A / CBS 708.71 / DSM 1257 / FGSC 987).